We begin with the raw amino-acid sequence, 595 residues long: DNA mismatch repair protein MutL (595 aa).

It belongs to the DNA mismatch repair MutL/HexB family.

In terms of biological role, this protein is involved in the repair of mismatches in DNA. It is required for dam-dependent methyl-directed DNA mismatch repair. May act as a 'molecular matchmaker', a protein that promotes the formation of a stable complex between two or more DNA-binding proteins in an ATP-dependent manner without itself being part of a final effector complex. This Rhodopseudomonas palustris (strain ATCC BAA-98 / CGA009) protein is DNA mismatch repair protein MutL.